A 322-amino-acid polypeptide reads, in one-letter code: Cytochrome c biogenesis protein CcsA (322 aa).

8 helical membrane-spanning segments follow: residues 15-35 (FSIV…VDGI), 45-65 (GMIV…TYSG), 72-92 (LYES…VPYF), 98-120 (YLST…GLLT), 144-164 (MILG…LLVI), 226-246 (GISL…VWAN), 253-273 (WNWD…AIYL), and 287-307 (AIVA…VNLL).

The protein belongs to the CcmF/CycK/Ccl1/NrfE/CcsA family. May interact with Ccs1.

Its subcellular location is the plastid. The protein localises to the chloroplast thylakoid membrane. Required during biogenesis of c-type cytochromes (cytochrome c6 and cytochrome f) at the step of heme attachment. This chain is Cytochrome c biogenesis protein CcsA, found in Coffea arabica (Arabian coffee).